The following is a 734-amino-acid chain: Ribosome-releasing factor 2, mitochondrial (734 aa).

The N-terminal 25 residues, 1-25 (MLQYCLLRRYRFLLRQHAQVIKRCY), are a transit peptide targeting the mitochondrion. Residues 27-303 (GDIRNIGILA…AVNAYLPMPE (277 aa)) enclose the tr-type G domain. GTP-binding positions include 36 to 43 (AHIDAGKT), 100 to 104 (DTPGH), and 154 to 157 (NKMD).

This sequence belongs to the TRAFAC class translation factor GTPase superfamily. Classic translation factor GTPase family. EF-G/EF-2 subfamily.

The protein localises to the mitochondrion. Functionally, mitochondrial GTPase that mediates the disassembly of ribosomes from messenger RNA at the termination of mitochondrial protein biosynthesis. Not involved in the GTP-dependent ribosomal translocation step during translation elongation. The sequence is that of Ribosome-releasing factor 2, mitochondrial from Drosophila grimshawi (Hawaiian fruit fly).